The sequence spans 65 residues: Neurotoxin BmK-M3 (65 aa).

One can recognise an LCN-type CS-alpha/beta domain in the interval 2–64; the sequence is RDAYIAKPEN…VPIRVWGKCH (63 aa). 4 disulfides stabilise this stretch: Cys-12–Cys-63, Cys-16–Cys-36, Cys-22–Cys-46, and Cys-26–Cys-48.

This sequence belongs to the long (4 C-C) scorpion toxin superfamily. Sodium channel inhibitor family. Alpha subfamily. Expressed by the venom gland.

It is found in the secreted. In terms of biological role, binds to sodium channels (Nav) and inhibits the inactivation of the activated channels, thereby blocking neuronal transmission. In Olivierus martensii (Manchurian scorpion), this protein is Neurotoxin BmK-M3.